The chain runs to 465 residues: Argininosuccinate lyase (465 aa).

The protein belongs to the lyase 1 family. Argininosuccinate lyase subfamily.

It is found in the cytoplasm. The enzyme catalyses 2-(N(omega)-L-arginino)succinate = fumarate + L-arginine. Its pathway is amino-acid biosynthesis; L-arginine biosynthesis; L-arginine from L-ornithine and carbamoyl phosphate: step 3/3. This is Argininosuccinate lyase from Deinococcus geothermalis (strain DSM 11300 / CIP 105573 / AG-3a).